A 755-amino-acid polypeptide reads, in one-letter code: Cellulose synthase-like protein B4 (755 aa).

2 helical membrane passes run 24–44 (AVDL…ILHV) and 49–69 (TVWI…LLIT). Active-site residues include aspartate 136 and aspartate 461. The next 6 membrane-spanning stretches (helical) occupy residues 533–556 (AYLY…LPAY), 569–589 (VYLG…LWEF), 615–635 (LFSV…VFIV), 674–694 (FLPG…CLVG), 702–722 (GSGL…LPFL), and 733–753 (IPFS…VLSV).

It belongs to the glycosyltransferase 2 family. Plant cellulose synthase-like B subfamily.

It localises to the golgi apparatus membrane. In terms of biological role, thought to be a Golgi-localized beta-glycan synthase that polymerize the backbones of noncellulosic polysaccharides (hemicelluloses) of plant cell wall. This chain is Cellulose synthase-like protein B4 (CSLB4), found in Arabidopsis thaliana (Mouse-ear cress).